The following is a 492-amino-acid chain: ATP synthase subunit beta, chloroplastic (492 aa).

ATP is bound at residue 170 to 177; that stretch reads GGAGVGKT.

This sequence belongs to the ATPase alpha/beta chains family. In terms of assembly, F-type ATPases have 2 components, CF(1) - the catalytic core - and CF(0) - the membrane proton channel. CF(1) has five subunits: alpha(3), beta(3), gamma(1), delta(1), epsilon(1). CF(0) has four main subunits: a(1), b(1), b'(1) and c(9-12).

It localises to the plastid. Its subcellular location is the chloroplast thylakoid membrane. It carries out the reaction ATP + H2O + 4 H(+)(in) = ADP + phosphate + 5 H(+)(out). Functionally, produces ATP from ADP in the presence of a proton gradient across the membrane. The catalytic sites are hosted primarily by the beta subunits. The chain is ATP synthase subunit beta, chloroplastic from Angiopteris lygodiifolia (Turnip fern).